A 342-amino-acid polypeptide reads, in one-letter code: Probable dual-specificity RNA methyltransferase RlmN (342 aa).

The active-site Proton acceptor is the Glu-91. Residues 97–327 (YRYGNTVCLS…VTVRRELGDE (231 aa)) form the Radical SAM core domain. The cysteines at positions 104 and 332 are disulfide-linked. Residues Cys-111, Cys-115, and Cys-118 each contribute to the [4Fe-4S] cluster site. Residues 158-159 (GE), Ser-190, 213-215 (SLH), and Asn-289 each bind S-adenosyl-L-methionine. Residue Cys-332 is the S-methylcysteine intermediate of the active site.

Belongs to the radical SAM superfamily. RlmN family. It depends on [4Fe-4S] cluster as a cofactor.

It localises to the cytoplasm. It catalyses the reaction adenosine(2503) in 23S rRNA + 2 reduced [2Fe-2S]-[ferredoxin] + 2 S-adenosyl-L-methionine = 2-methyladenosine(2503) in 23S rRNA + 5'-deoxyadenosine + L-methionine + 2 oxidized [2Fe-2S]-[ferredoxin] + S-adenosyl-L-homocysteine. The catalysed reaction is adenosine(37) in tRNA + 2 reduced [2Fe-2S]-[ferredoxin] + 2 S-adenosyl-L-methionine = 2-methyladenosine(37) in tRNA + 5'-deoxyadenosine + L-methionine + 2 oxidized [2Fe-2S]-[ferredoxin] + S-adenosyl-L-homocysteine. Functionally, specifically methylates position 2 of adenine 2503 in 23S rRNA and position 2 of adenine 37 in tRNAs. The chain is Probable dual-specificity RNA methyltransferase RlmN from Carboxydothermus hydrogenoformans (strain ATCC BAA-161 / DSM 6008 / Z-2901).